A 612-amino-acid polypeptide reads, in one-letter code: Cyclin-dependent kinase 8 (612 aa).

A Protein kinase domain is found at 23 to 345 (FENSKEIGRG…CEEAMNDIYF (323 aa)). ATP contacts are provided by residues 29 to 37 (IGRGTYGLV) and lysine 57. Aspartate 155 acts as the Proton acceptor in catalysis. 5 stretches are compositionally biased toward low complexity: residues 403 to 455 (QQQM…MGQP), 472 to 483 (HQMMQQQHQSQH), 543 to 555 (PQPGPSGYYQQRP), 564 to 573 (QGYMNPQMGM), and 600 to 612 (NPQQQQQWQQYHR). Disordered stretches follow at residues 403 to 483 (QQQM…QSQH) and 543 to 612 (PQPG…QYHR).

Belongs to the protein kinase superfamily. CMGC Ser/Thr protein kinase family. CDC2/CDKX subfamily. As to quaternary structure, component of the Mediator complex. The cofactor is Mg(2+).

The protein resides in the nucleus. It carries out the reaction L-seryl-[protein] + ATP = O-phospho-L-seryl-[protein] + ADP + H(+). The catalysed reaction is L-threonyl-[protein] + ATP = O-phospho-L-threonyl-[protein] + ADP + H(+). The enzyme catalyses [DNA-directed RNA polymerase] + ATP = phospho-[DNA-directed RNA polymerase] + ADP + H(+). Functionally, component of the Mediator complex, a coactivator involved in regulated gene transcription of nearly all RNA polymerase II-dependent genes. Mediator functions as a bridge to convey information from gene-specific regulatory proteins to the basal RNA polymerase II transcription machinery. Mediator is recruited to promoters by direct interactions with regulatory proteins and serves as a scaffold for the assembly of a functional pre-initiation complex with RNA polymerase II and the general transcription factors. Phosphorylates the CTD (C-terminal domain) of the large subunit of RNA polymerase II (RNAp II), which may inhibit the formation of a transcription initiation complex. This chain is Cyclin-dependent kinase 8 (cdk-8), found in Caenorhabditis briggsae.